The primary structure comprises 223 residues: Membrane protein (223 aa).

Over Met1–Glu18 the chain is Virion surface. The chain crosses the membrane as a helical span at residues Tyr19 to Ala39. Topologically, residues Thr40 to Lys49 are intravirion. Residues Met50–Tyr70 form a helical membrane-spanning segment. At Pro71–Gly75 the chain is on the virion surface side. A helical membrane pass occupies residues Gly76–Ile96. The Intravirion segment spans residues Gln97 to Thr223.

Belongs to the gammacoronaviruses M protein family. As to quaternary structure, homomultimer. Interacts with envelope E protein in the budding compartment of the host cell, which is located between endoplasmic reticulum and the Golgi complex. Forms a complex with HE and S proteins. Interacts with nucleocapsid N protein. This interaction probably participates in RNA packaging into the virus.

The protein localises to the virion membrane. It localises to the host Golgi apparatus membrane. Functionally, component of the viral envelope that plays a central role in virus morphogenesis and assembly via its interactions with other viral proteins. The sequence is that of Membrane protein from Gallus gallus (Chicken).